The chain runs to 136 residues: Large ribosomal subunit protein uL16 (136 aa).

This sequence belongs to the universal ribosomal protein uL16 family. In terms of assembly, part of the 50S ribosomal subunit.

Functionally, binds 23S rRNA and is also seen to make contacts with the A and possibly P site tRNAs. The polypeptide is Large ribosomal subunit protein uL16 (Erwinia tasmaniensis (strain DSM 17950 / CFBP 7177 / CIP 109463 / NCPPB 4357 / Et1/99)).